The following is a 179-amino-acid chain: Large ribosomal subunit protein uL6 (179 aa).

The protein belongs to the universal ribosomal protein uL6 family. In terms of assembly, part of the 50S ribosomal subunit.

In terms of biological role, this protein binds to the 23S rRNA, and is important in its secondary structure. It is located near the subunit interface in the base of the L7/L12 stalk, and near the tRNA binding site of the peptidyltransferase center. The polypeptide is Large ribosomal subunit protein uL6 (Chlorobaculum tepidum (strain ATCC 49652 / DSM 12025 / NBRC 103806 / TLS) (Chlorobium tepidum)).